Reading from the N-terminus, the 204-residue chain is Large ribosomal subunit protein uL4 (204 aa).

Residues R44 to S76 are disordered.

The protein belongs to the universal ribosomal protein uL4 family. Part of the 50S ribosomal subunit.

Functionally, one of the primary rRNA binding proteins, this protein initially binds near the 5'-end of the 23S rRNA. It is important during the early stages of 50S assembly. It makes multiple contacts with different domains of the 23S rRNA in the assembled 50S subunit and ribosome. Forms part of the polypeptide exit tunnel. The protein is Large ribosomal subunit protein uL4 of Gluconobacter oxydans (strain 621H) (Gluconobacter suboxydans).